A 394-amino-acid chain; its full sequence is Glycerol-1-phosphate dehydrogenase [NAD(P)+] (394 aa).

NAD(+) contacts are provided by residues Asp54, 116–120 (GTIHD), and 138–141 (TAPS). Asp143 contributes to the substrate binding site. An NAD(+)-binding site is contributed by Ser147. Asp190 contacts substrate. Ni(2+) is bound by residues Asp190 and His270. His274 provides a ligand contact to substrate. Residue His290 coordinates Ni(2+).

This sequence belongs to the glycerol-1-phosphate dehydrogenase family. As to quaternary structure, homodimer. Requires Ni(2+) as cofactor.

It is found in the cytoplasm. It carries out the reaction sn-glycerol 1-phosphate + NAD(+) = dihydroxyacetone phosphate + NADH + H(+). It catalyses the reaction sn-glycerol 1-phosphate + NADP(+) = dihydroxyacetone phosphate + NADPH + H(+). Catalyzes the NAD(P)H-dependent reduction of dihydroxyacetonephosphate (DHAP or glycerone phosphate) to glycerol 1-phosphate (G1P). The G1P thus generated is probably used for the synthesis of phosphoglycerolipids in Gram-positive bacterial species. Prefers NADH over NADPH as coenzyme. Is also able to catalyze the reverse reaction, i.e. the NAD(+)-dependent oxidation of G1P but not of G3P. Does not possess glycerol dehydrogenase activity. The chain is Glycerol-1-phosphate dehydrogenase [NAD(P)+] (egsA) from Bacillus subtilis (strain 168).